The primary structure comprises 1116 residues: Protein translocase subunit SecA (1116 aa).

Residues Gln-176, 194 to 198 (GEGKT), and Asp-693 each bind ATP.

Belongs to the SecA family. As to quaternary structure, monomer and homodimer. Part of the essential Sec protein translocation apparatus which comprises SecA, SecYEG and auxiliary proteins SecDF. Other proteins may also be involved.

The protein resides in the cell inner membrane. It localises to the cytoplasm. The catalysed reaction is ATP + H2O + cellular proteinSide 1 = ADP + phosphate + cellular proteinSide 2.. Functionally, part of the Sec protein translocase complex. Interacts with the SecYEG preprotein conducting channel. Has a central role in coupling the hydrolysis of ATP to the transfer of proteins into and across the cell membrane, serving as an ATP-driven molecular motor driving the stepwise translocation of polypeptide chains across the membrane. The protein is Protein translocase subunit SecA of Amoebophilus asiaticus (strain 5a2).